We begin with the raw amino-acid sequence, 219 residues long: Transmembrane emp24 domain-containing protein 10 (219 aa).

Residues 1–31 form the signal peptide; that stretch reads MSGLSGPLSWPGPLLSALLFLFLLGPSSVLG. Positions 1–142 are required for interaction with STX17; sequence MSGLSGPLSW…KNYEEIAKVE (142 aa). The Lumenal segment spans residues 32 to 185; sequence ISFHLPVNSR…RDTNESTNTR (154 aa). The region spanning 41–193 is the GOLD domain; that stretch reads RKCLREEIHK…TRVLYFSIFS (153 aa). The interval 147–178 is required for TMED10 and TMED2 cis-Golgi network localization; it reads LEVELRRLEDLSESIVNDFAYMKKREEEMRDT. Arg-171 and Arg-176 each carry dimethylated arginine. N-linked (GlcNAc...) asparagine glycosylation occurs at Asn-179. The helical transmembrane segment at 186–206 threads the bilayer; sequence VLYFSIFSMFCLIGLATWQVF. The interval 204–219 is interaction with COPG1; it reads QVFYLRRFFKAKKLIE. Residues 207 to 219 lie on the Cytoplasmic side of the membrane; sequence YLRRFFKAKKLIE. The segment at 207–219 is interaction with ARF1 and IL1B; it reads YLRRFFKAKKLIE. The COPII vesicle coat-binding signature appears at 211–212; it reads FF. Positions 211–219 match the COPI vesicle coat-binding motif; the sequence is FFKAKKLIE.

It belongs to the EMP24/GP25L family. Predominantly dimeric and to a lesser extent monomeric in the ER. Monomer and dimer in ERGIC and cis-Golgi network. Forms homooligomer (via GOLD domain); the assembly is promoted by direct binding with leaderless cargos and may form a protein channel that facilitates cargo entry into the ERGIC. Forms heterooligomeric complexes with other members of the p24 family such as TMED2, TMED7 and TMED9. Interacts (via GOLD domain) with TMED2 (via GOLD domain); the complex is required for export of TMED10 from the ER to the cis-Golgi network; the complex is proposed to be involved in cis-Golgi network dynamics and / or biogenesis. Associates with the COPI vesicle coat subunits (coatomer). Tetramerization of the cytoplasmic domain at the Golgi membrane in vitro; the complex is proposed to interact with COPI coatomer and induce budding of the vesicles. Interacts with COPG1; the interaction involves TMED10 homodimer. Interacts with ARF1 (GDP-bound); the interaction probably involves a TMED10 oligomer. Interacts with SEC23A, SEC24B, SEC24C and SEC24D components of the coat protein complex II/COPII, indicative of an association of TMED10 with the COPII vesicle coat. Interacts with CD59. Interacts with MPPE1/PGAP5; the complex might recruit and sort GPI-anchored proteins to the ER-exit site, or the interaction might lead to recycling of PGAP5 between the ER and the Golgi. Interacts with F2LR1/PAR2. Interacts with KDELR2/ERD2; the interaction is disrupted by KDELR2 ligand. Found in a complex composed at least of SURF4, TMED2 and TMED10. Associates with the presenilin-dependent gamma-secretase complex. Interacts with STX17; the interaction is direct. Interacts with IL-1; the interaction is direct. Interacts with RAB21 (active GTP-bound form); the interaction is indirect and regulates TMED10 abundance and localization at the Golgi. As to expression, ubiquitous.

It localises to the endoplasmic reticulum membrane. Its subcellular location is the endoplasmic reticulum-Golgi intermediate compartment membrane. The protein resides in the golgi apparatus membrane. The protein localises to the golgi apparatus. It is found in the cis-Golgi network membrane. It localises to the trans-Golgi network membrane. Its subcellular location is the cytoplasmic vesicle. The protein resides in the secretory vesicle membrane. The protein localises to the cell membrane. It is found in the melanosome. Its function is as follows. Cargo receptor involved in protein vesicular trafficking and quality control in the endoplasmic reticulum (ER) and Golgi. The p24 protein family is a group of transmembrane proteins that bind coat protein complex I/COPI and coat protein complex II/COPII involved in vesicular trafficking between the membranes. Acts at the lumenal side for incorporation of secretory cargo molecules into transport vesicles and involved in vesicle coat formation at the cytoplasmic side. Mainly functions in the early secretory pathway and cycles between the ER, ER-Golgi intermediate compartment (ERGIC) and Golgi, mediating cargo transport through COPI and COPII-coated vesicles. In COPII vesicle-mediated anterograde transport, involved in the transport of GPI-anchored proteins by acting together with TMED2 as their cargo receptor; the function specifically implies SEC24C and SEC24D of the COPII vesicle coat and lipid raft-like microdomains of the ER. Recognizes GPI anchors structural remodeled in the ER by the GPI inositol-deacylase/PGAP1 and the metallophosphoesterase MPPE1/PGAP5. In COPI vesicle-mediated retrograde transport, involved in the biogenesis of COPI vesicles and vesicle coat recruitment. Involved in trafficking of amyloid beta A4 protein and soluble APP-beta release (independent from the modulation of gamma-secretase activity). Involved in the KDELR2-mediated retrograde transport of the toxin A subunit (CTX-A-K63)together with COPI and the COOH terminus of KDELR2. On Golgi membranes, acts as a primary receptor for ARF1-GDP, a GTP-binding protein involved in COPI-vesicle formation. Increases coatomer-dependent GTPase-activating activity of ARFGAP2 which mediates the hydrolysis of ARF1-bound GTP and therefore modulates protein trafficking from the Golgi apparatus. Involved in the exocytic trafficking of G protein-coupled receptors F2LR1/PAR2 (trypsin and tryspin-like enzyme receptor), OPRM1 (opioid receptor) and P2RY4 (UTD and UDP receptor) from the Golgi to the plasma membrane, thus contributing to receptor resensitization. In addition to its cargo receptor activity, may also act as a protein channel after oligomerization, facilitating the post-translational entry of leaderless cytoplasmic cargo into the ERGIC. Involved in the translocation into ERGIC, the vesicle entry and the secretion of leaderless cargos (lacking the secretion signal sequence), including the mature form of interleukin 1/IL-1 family members, the alpha-crystallin B chain HSPB5, the carbohydrate-binding proteins galectin-1/LGALS1 and galectin-3/LGALS3, the microtubule-associated protein Tau/MAPT, and the annexin A1/ANXA1; the translocation process is dependent on cargo protein unfolding and enhanced by chaperones HSP90AB1 and HSP90B1/GRP9. Could also associates with the presenilin-dependent gamma-secretase complex in order to regulate gamma-cleavages of the amyloid beta A4 protein to yield amyloid-beta 40/Abeta40. The polypeptide is Transmembrane emp24 domain-containing protein 10 (Rattus norvegicus (Rat)).